Consider the following 573-residue polypeptide: uncharacterized protein (573 aa).

In terms of domain architecture, ABC transmembrane type-1 spans 15–298 (AGIALILMLT…FPFLIMIFTR (284 aa)). Helical transmembrane passes span 17-37 (IALI…LLIA), 52-72 (VWIW…AGML), 127-147 (IFMS…GIVL), 153-173 (VKLG…LLWV), 238-258 (FTMP…LWAG), and 275-295 (IINY…LIMI). Residues 330–563 (IEFQHVSFRY…SQLYKRIYES (234 aa)) form the ABC transporter domain. 364 to 371 (GATGSGKS) is an ATP binding site.

The protein belongs to the ABC transporter superfamily.

The protein localises to the cell membrane. This is an uncharacterized protein from Bacillus subtilis (strain 168).